The sequence spans 134 residues: ATP synthase epsilon chain, chloroplastic (134 aa).

It belongs to the ATPase epsilon chain family. In terms of assembly, F-type ATPases have 2 components, CF(1) - the catalytic core - and CF(0) - the membrane proton channel. CF(1) has five subunits: alpha(3), beta(3), gamma(1), delta(1), epsilon(1). CF(0) has three main subunits: a, b and c.

The protein resides in the plastid. It is found in the chloroplast thylakoid membrane. Functionally, produces ATP from ADP in the presence of a proton gradient across the membrane. This Gracilaria tenuistipitata var. liui (Red alga) protein is ATP synthase epsilon chain, chloroplastic.